A 300-amino-acid chain; its full sequence is Zinc finger protein RME1 (300 aa).

Positions 80 to 90 are enriched in polar residues; that stretch reads QAYDSTSSTEE. The segment at 80 to 100 is disordered; that stretch reads QAYDSTSSTEEGTAPQLRPDE. C2H2-type zinc fingers lie at residues 178–199, 206–234, and 256–281; these read YHCSHCSEKFATLVEFAAHLDE, CKCPIEQCPWKILGFQQATGLRRHCASQH, and LNCPFPICQKTFRRKDAYKRHVAMVH.

Its subcellular location is the nucleus. Involved in the control of meiosis. Represses the transcription of the IME1 gene thereby inhibiting cells from entering meiosis. But also activates the CLN2 gene thus promoting mitosis. This chain is Zinc finger protein RME1 (RME1), found in Saccharomyces cerevisiae (strain ATCC 204508 / S288c) (Baker's yeast).